We begin with the raw amino-acid sequence, 465 residues long: Alpha-2A adrenergic receptor (465 aa).

Topologically, residues 1-48 (MFRQEQPLAEGSFAPMGSLQPDAGNASWNGTEAPGGGARATPYSLQVT) are extracellular. Residues asparagine 25 and asparagine 29 are each glycosylated (N-linked (GlcNAc...) asparagine). The chain crosses the membrane as a helical span at residues 49 to 74 (LTLVCLAGLLMLLTVFGNVLVIIAVF). The Cytoplasmic portion of the chain corresponds to 75-85 (TSRALKAPQNL). A helical membrane pass occupies residues 86–111 (FLVSLASADILVATLVIPFSLANEVM). Residues 112-121 (GYWYFGKAWC) lie on the Extracellular side of the membrane. Cysteines 121 and 203 form a disulfide. The chain crosses the membrane as a helical span at residues 122-144 (EIYLALDVLFCTSSIVHLCAISL). Topologically, residues 145 to 166 (DRYWSITQAIEYNLKRTPRRIK) are cytoplasmic. Residues 167-187 (AIIITVWVISAVISFPPLISI) form a helical membrane-spanning segment. Topologically, residues 188 to 209 (EKKGGGGGPQPAEPRCEINDQK) are extracellular. A helical transmembrane segment spans residues 210–232 (WYVISSCIGSFFAPCLIMILVYV). The Cytoplasmic segment spans residues 233–389 (RIYQIAKRRT…RQNREKRFTF (157 aa)). The interval 242 to 368 (TRVPPSRRGP…TPAAGPGEER (127 aa)) is disordered. A compositionally biased stretch (basic and acidic residues) spans 313–330 (SSDHAERPPGPRRPERGP). Serine 346 carries the phosphoserine modification. An Omega-N-methylarginine modification is found at arginine 368. The chain crosses the membrane as a helical span at residues 390-410 (VLAVVIGVFVVCWFPFFFTYT). Residues 411-424 (LTAVGCSVPRTLFK) lie on the Extracellular side of the membrane. A helical transmembrane segment spans residues 425–444 (FFFWFGYCNSSLNPVIYTIF). The Cytoplasmic segment spans residues 445–465 (NHDFRRAFKKILCRGDRKRIV). Cysteine 457 carries S-palmitoyl cysteine lipidation.

It belongs to the G-protein coupled receptor 1 family. Adrenergic receptor subfamily. ADRA2A sub-subfamily.

It localises to the cell membrane. Functionally, alpha-2 adrenergic receptors mediate the catecholamine-induced inhibition of adenylate cyclase through the action of G proteins. The rank order of potency for agonists of this receptor is oxymetazoline &gt; clonidine &gt; epinephrine &gt; norepinephrine &gt; phenylephrine &gt; dopamine &gt; p-synephrine &gt; p-tyramine &gt; serotonin = p-octopamine. For antagonists, the rank order is yohimbine &gt; phentolamine = mianserine &gt; chlorpromazine = spiperone = prazosin &gt; propanolol &gt; alprenolol = pindolol. This chain is Alpha-2A adrenergic receptor, found in Homo sapiens (Human).